Here is a 93-residue protein sequence, read N- to C-terminus: Phosphoribosyl-ATP pyrophosphatase (93 aa).

This sequence belongs to the PRA-PH family.

Its subcellular location is the cytoplasm. It carries out the reaction 1-(5-phospho-beta-D-ribosyl)-ATP + H2O = 1-(5-phospho-beta-D-ribosyl)-5'-AMP + diphosphate + H(+). The protein operates within amino-acid biosynthesis; L-histidine biosynthesis; L-histidine from 5-phospho-alpha-D-ribose 1-diphosphate: step 2/9. The protein is Phosphoribosyl-ATP pyrophosphatase of Rhodococcus erythropolis (strain PR4 / NBRC 100887).